The primary structure comprises 505 residues: Amidophosphoribosyltransferase (505 aa).

Cysteine 2 (nucleophile) is an active-site residue. In terms of domain architecture, Glutamine amidotransferase type-2 spans 2–235 (CGIVGIVSQS…AGEAVYVTFD (234 aa)). Residues threonine 306, aspartate 368, and aspartate 369 each contribute to the Mg(2+) site. The disordered stretch occupies residues 484 to 505 (RNDNAKKKREKQASNLEIYNEQ). Polar residues predominate over residues 496-505 (ASNLEIYNEQ).

In the C-terminal section; belongs to the purine/pyrimidine phosphoribosyltransferase family. The cofactor is Mg(2+).

The enzyme catalyses 5-phospho-beta-D-ribosylamine + L-glutamate + diphosphate = 5-phospho-alpha-D-ribose 1-diphosphate + L-glutamine + H2O. Its pathway is purine metabolism; IMP biosynthesis via de novo pathway; N(1)-(5-phospho-D-ribosyl)glycinamide from 5-phospho-alpha-D-ribose 1-diphosphate: step 1/2. In terms of biological role, catalyzes the formation of phosphoribosylamine from phosphoribosylpyrophosphate (PRPP) and glutamine. The polypeptide is Amidophosphoribosyltransferase (Haemophilus influenzae (strain ATCC 51907 / DSM 11121 / KW20 / Rd)).